Reading from the N-terminus, the 340-residue chain is Heat-inducible transcription repressor HrcA (340 aa).

It belongs to the HrcA family.

Functionally, negative regulator of class I heat shock genes (grpE-dnaK-dnaJ and groELS operons). Prevents heat-shock induction of these operons. The chain is Heat-inducible transcription repressor HrcA from Mycoplasmopsis synoviae (strain 53) (Mycoplasma synoviae).